Reading from the N-terminus, the 90-residue chain is Probable Fe(2+)-trafficking protein (90 aa).

This sequence belongs to the Fe(2+)-trafficking protein family.

In terms of biological role, could be a mediator in iron transactions between iron acquisition and iron-requiring processes, such as synthesis and/or repair of Fe-S clusters in biosynthetic enzymes. This is Probable Fe(2+)-trafficking protein from Photobacterium profundum (strain SS9).